The primary structure comprises 189 residues: Pyridoxal 5'-phosphate synthase subunit PdxT (189 aa).

Gly-47 to Ser-49 lines the L-glutamine pocket. The active-site Nucleophile is Cys-79. L-glutamine contacts are provided by residues Arg-105 and Ile-132–Arg-133. Active-site charge relay system residues include His-168 and Glu-170.

The protein belongs to the glutaminase PdxT/SNO family. In the presence of PdxS, forms a dodecamer of heterodimers. Only shows activity in the heterodimer.

It carries out the reaction aldehydo-D-ribose 5-phosphate + D-glyceraldehyde 3-phosphate + L-glutamine = pyridoxal 5'-phosphate + L-glutamate + phosphate + 3 H2O + H(+). The enzyme catalyses L-glutamine + H2O = L-glutamate + NH4(+). It functions in the pathway cofactor biosynthesis; pyridoxal 5'-phosphate biosynthesis. In terms of biological role, catalyzes the hydrolysis of glutamine to glutamate and ammonia as part of the biosynthesis of pyridoxal 5'-phosphate. The resulting ammonia molecule is channeled to the active site of PdxS. The chain is Pyridoxal 5'-phosphate synthase subunit PdxT from Methanocorpusculum labreanum (strain ATCC 43576 / DSM 4855 / Z).